The primary structure comprises 466 residues: Acetyl-coenzyme A carboxylase carboxyl transferase subunit beta, chloroplastic (466 aa).

A CoA carboxyltransferase N-terminal domain is found at 198 to 466 (LWIQCENCYE…FPLNQNSIGQ (269 aa)). Residues C202, C205, C221, and C224 each contribute to the Zn(2+) site. A C4-type zinc finger spans residues 202 to 224 (CENCYELNYKKLLKSKMRICDEC).

Belongs to the AccD/PCCB family. As to quaternary structure, acetyl-CoA carboxylase is a heterohexamer composed of biotin carboxyl carrier protein, biotin carboxylase and 2 subunits each of ACCase subunit alpha and ACCase plastid-coded subunit beta (accD). Zn(2+) is required as a cofactor.

It is found in the plastid. The protein localises to the chloroplast stroma. It carries out the reaction N(6)-carboxybiotinyl-L-lysyl-[protein] + acetyl-CoA = N(6)-biotinyl-L-lysyl-[protein] + malonyl-CoA. It participates in lipid metabolism; malonyl-CoA biosynthesis; malonyl-CoA from acetyl-CoA: step 1/1. In terms of biological role, component of the acetyl coenzyme A carboxylase (ACC) complex. Biotin carboxylase (BC) catalyzes the carboxylation of biotin on its carrier protein (BCCP) and then the CO(2) group is transferred by the transcarboxylase to acetyl-CoA to form malonyl-CoA. The sequence is that of Acetyl-coenzyme A carboxylase carboxyl transferase subunit beta, chloroplastic from Fagopyrum esculentum subsp. ancestrale (Wild buckwheat).